The following is a 291-amino-acid chain: 33 kDa chaperonin (291 aa).

2 disulfides stabilise this stretch: cysteine 229/cysteine 231 and cysteine 262/cysteine 265.

Belongs to the HSP33 family. In terms of processing, under oxidizing conditions two disulfide bonds are formed involving the reactive cysteines. Under reducing conditions zinc is bound to the reactive cysteines and the protein is inactive.

It is found in the cytoplasm. Functionally, redox regulated molecular chaperone. Protects both thermally unfolding and oxidatively damaged proteins from irreversible aggregation. Plays an important role in the bacterial defense system toward oxidative stress. This is 33 kDa chaperonin from Vibrio vulnificus (strain YJ016).